The following is a 56-amino-acid chain: Large ribosomal subunit protein uL30 (56 aa).

The protein belongs to the universal ribosomal protein uL30 family. Part of the 50S ribosomal subunit.

The protein is Large ribosomal subunit protein uL30 of Oleidesulfovibrio alaskensis (strain ATCC BAA-1058 / DSM 17464 / G20) (Desulfovibrio alaskensis).